The chain runs to 162 residues: uncharacterized protein (162 aa).

The N-terminal stretch at 1-34 is a signal peptide; it reads MAREVISTSILMIATVVAVTAAIMVILPAVKDLA.

This is an uncharacterized protein from Archaeoglobus fulgidus (strain ATCC 49558 / DSM 4304 / JCM 9628 / NBRC 100126 / VC-16).